The following is a 176-amino-acid chain: NAD(P)H-quinone oxidoreductase subunit 6, chloroplastic (176 aa).

Helical transmembrane passes span 10–30, 32–52, 61–81, 92–112, and 152–172; these read ILLV…ILLT, TIYS…FYIL, AQLL…VMFM, IWTV…FSLI, and FILP…GAIA.

Belongs to the complex I subunit 6 family. NDH is composed of at least 16 different subunits, 5 of which are encoded in the nucleus.

The protein localises to the plastid. It is found in the chloroplast thylakoid membrane. It carries out the reaction a plastoquinone + NADH + (n+1) H(+)(in) = a plastoquinol + NAD(+) + n H(+)(out). It catalyses the reaction a plastoquinone + NADPH + (n+1) H(+)(in) = a plastoquinol + NADP(+) + n H(+)(out). In terms of biological role, NDH shuttles electrons from NAD(P)H:plastoquinone, via FMN and iron-sulfur (Fe-S) centers, to quinones in the photosynthetic chain and possibly in a chloroplast respiratory chain. The immediate electron acceptor for the enzyme in this species is believed to be plastoquinone. Couples the redox reaction to proton translocation, and thus conserves the redox energy in a proton gradient. The polypeptide is NAD(P)H-quinone oxidoreductase subunit 6, chloroplastic (ndhG) (Piper cenocladum (Ant piper)).